The following is a 1472-amino-acid chain: Adhesion G protein-coupled receptor L1 (1472 aa).

A signal peptide spans 1-24; that stretch reads MARLAAVLWSLCVTAILVTSATQG. At 25-857 the chain is on the extracellular side; that stretch reads LSRAGLPFGL…EIYQGRINEL (833 aa). One can recognise an SUEL-type lectin domain in the interval 40–129; it reads ACEGYPIELR…KYLEVQYDCV (90 aa). 5 disulfide bridges follow: cysteine 41–cysteine 71, cysteine 50–cysteine 128, cysteine 83–cysteine 115, cysteine 96–cysteine 102, and cysteine 140–cysteine 322. Glutamate 42 serves as a coordination point for alpha-L-rhamnose. Asparagine 98 is a glycosylation site (N-linked (GlcNAc...) asparagine). Position 117–120 (117–120) interacts with alpha-L-rhamnose; the sequence is GTYK. The 260-residue stretch at 139–398 folds into the Olfactomedin-like domain; the sequence is VCPGTLQKVL…VVRYSLEFGP (260 aa). The interval 400 to 468 is disordered; that stretch reads DPSAGPATSP…APAPSTRRPP (69 aa). A compositionally biased stretch (low complexity) spans 405–441; the sequence is PATSPPLSTTTTARPTPLTSTASPAATTPLRRAPLTT. Residues 453-468 are compositionally biased toward pro residues; that stretch reads DLPPATAPAPSTRRPP. Intrachain disulfides connect cysteine 480/cysteine 515 and cysteine 503/cysteine 532. Asparagine 531, asparagine 640, asparagine 741, asparagine 800, asparagine 805, and asparagine 826 each carry an N-linked (GlcNAc...) asparagine glycan. The GAIN-B domain maps to 669 to 850; it reads PARFLAAKQN…AVLMAHREIY (182 aa). Intrachain disulfides connect cysteine 801–cysteine 832 and cysteine 820–cysteine 834. Residues 801-850 are GPS; sequence CSFWNYSERSMLGYWSTQGCRLVESNKTHTTCACSHLTNFAVLMAHREIY. A helical transmembrane segment spans residues 858-878; it reads LLSVITWVGIVISLVCLAICI. The Cytoplasmic portion of the chain corresponds to 879-892; the sequence is STFCFLRGLQTDRN. The helical transmembrane segment at 893–913 threads the bilayer; the sequence is TIHKNLCINLFLAELLFLVGI. Topologically, residues 914–919 are extracellular; it reads DKTQYE. Residues 920–940 traverse the membrane as a helical segment; sequence IACPIFAGLLHYFFLAAFSWL. Over 941-963 the chain is Cytoplasmic; that stretch reads CLEGVHLYLLLVEVFESEYSRTK. Residues 964 to 984 form a helical membrane-spanning segment; the sequence is YYYLGGYCFPALVVGIAAAID. Residues 985–1001 are Extracellular-facing; the sequence is YRSYGTEKACWLRVDNY. The chain crosses the membrane as a helical span at residues 1002 to 1022; that stretch reads FIWSFIGPVSFVIVVNLVFLM. At 1023-1049 the chain is on the cytoplasmic side; that stretch reads VTLHKMVRSSSVLKPDSSRLDNIKSWA. A helical transmembrane segment spans residues 1050-1070; sequence LGAIALLFLLGLTWAFGLLFI. Topologically, residues 1071-1074 are extracellular; sequence NKES. The helical transmembrane segment at 1075–1095 threads the bilayer; it reads VVMAYLFTTFNAFQGVFIFVF. The Cytoplasmic segment spans residues 1096–1472; it reads HCALQKKVHK…DGQMQLVTSL (377 aa). Omega-N-methylarginine is present on arginine 1193. Phosphoserine is present on serine 1219. Disordered stretches follow at residues 1247–1271, 1291–1325, 1358–1427, and 1449–1472; these read FNNS…PRGR, NLRG…GGPG, ESES…SRPP, and YLAA…VTSL. Pro residues-rich tracts occupy residues 1301 to 1313 and 1406 to 1418; these read GPPP…PPVP and ALPP…PGPP. Serine 1471 carries the post-translational modification Phosphoserine.

It belongs to the G-protein coupled receptor 2 family. Adhesion G-protein coupled receptor (ADGR) subfamily. Forms a heterodimer, consisting of a large extracellular region (p120) non-covalently linked to a seven-transmembrane moiety (p85). Interacts with syntaxin and with proteins of the SHANK family via the PDZ domain. Interacts (via extracellular domain) with FLRT1, FLRT2 and FLRT3 (via extracellular domain). In terms of processing, autoproteolytically cleaved into 2 subunits, an extracellular subunit and a seven-transmembrane subunit. This proteolytic processing takes place early in the biosynthetic pathway, either in the endoplasmic reticulum or in the early compartment of the Golgi apparatus. As to expression, brain-specific expression but low levels are also detected in kidney, lung and spleen.

The protein localises to the cell membrane. It localises to the cell projection. It is found in the axon. Its subcellular location is the growth cone. The protein resides in the synapse. The protein localises to the presynaptic cell membrane. It localises to the synaptosome. In terms of biological role, calcium-independent receptor of high affinity for alpha-latrotoxin, an excitatory neurotoxin present in black widow spider venom which triggers massive exocytosis from neurons and neuroendocrine cells. Receptor for TENM2 that mediates heterophilic synaptic cell-cell contact and postsynaptic specialization. Receptor probably implicated in the regulation of exocytosis. The polypeptide is Adhesion G protein-coupled receptor L1 (Bos taurus (Bovine)).